We begin with the raw amino-acid sequence, 187 residues long: Probable chemoreceptor glutamine deamidase CheD 1 (187 aa).

The protein belongs to the CheD family.

It catalyses the reaction L-glutaminyl-[protein] + H2O = L-glutamyl-[protein] + NH4(+). In terms of biological role, probably deamidates glutamine residues to glutamate on methyl-accepting chemotaxis receptors (MCPs), playing an important role in chemotaxis. The protein is Probable chemoreceptor glutamine deamidase CheD 1 of Ruegeria sp. (strain TM1040) (Silicibacter sp.).